The following is a 192-amino-acid chain: Xanthine phosphoribosyltransferase (192 aa).

Xanthine is bound by residues L20 and N27. 128–132 is a binding site for 5-phospho-alpha-D-ribose 1-diphosphate; sequence ANGDA. Xanthine is bound at residue K156.

It belongs to the purine/pyrimidine phosphoribosyltransferase family. Xpt subfamily. In terms of assembly, homodimer.

It is found in the cytoplasm. It carries out the reaction XMP + diphosphate = xanthine + 5-phospho-alpha-D-ribose 1-diphosphate. It participates in purine metabolism; XMP biosynthesis via salvage pathway; XMP from xanthine: step 1/1. In terms of biological role, converts the preformed base xanthine, a product of nucleic acid breakdown, to xanthosine 5'-monophosphate (XMP), so it can be reused for RNA or DNA synthesis. The sequence is that of Xanthine phosphoribosyltransferase from Staphylococcus aureus (strain JH1).